The following is a 487-amino-acid chain: Cyclic AMP-dependent transcription factor ATF-2 (487 aa).

Residues 7-31 (FLCTAPGCGQRFTNEDHLAVHKHKH) form a C2H2-type zinc finger. Disordered stretches follow at residues 106–132 (EEPSVVETTHQDSPLPHPESTTNDEKE) and 267–354 (QHPQ…CRQK). The segment covering 298 to 319 (QQPATSTTETPASPAQPTQQTP) has biased composition (low complexity). Over residues 328–345 (AANEDPDEKRRKFLERNR) the composition is skewed to basic and acidic residues. Residues 334-397 (DEKRRKFLER…AQLKQLLLAH (64 aa)) enclose the bZIP domain. Residues 336–356 (KRRKFLERNRAAASRCRQKRK) are basic motif. Residues 362–390 (LEKKAEDLSSLNGQLQNEVTLLRNEVAQL) form a leucine-zipper region. The Nuclear export signal signature appears at 387-396 (VAQLKQLLLA). The tract at residues 407 to 487 (KKSGYHTADK…PPSQAQPSGS (81 aa)) is disordered. The segment covering 425–436 (VPSSPHTEAIQH) has biased composition (polar residues). The span at 437–449 (SSVSTSNGVSSTS) shows a compositional bias: low complexity. The span at 457-468 (SVLTQLADQSSE) shows a compositional bias: polar residues.

The protein belongs to the bZIP family. ATF subfamily. As to quaternary structure, binds DNA as a dimer and can form a homodimer in the absence of DNA. Can form a heterodimer with JUN. Heterodimerization is essential for its transcriptional activity.

It is found in the nucleus. The protein localises to the cytoplasm. The protein resides in the mitochondrion outer membrane. In terms of biological role, transcriptional activator which regulates the transcription of various genes, including those involved in anti-apoptosis, cell growth, and DNA damage response. Dependent on its binding partner, binds to CRE (cAMP response element) consensus sequences (5'-TGACGTCA-3') or to AP-1 (activator protein 1) consensus sequences (5'-TGACTCA-3'). The chain is Cyclic AMP-dependent transcription factor ATF-2 (ATF2) from Gallus gallus (Chicken).